The primary structure comprises 284 residues: Putative mitochondrial carrier protein PET8 (284 aa).

Solcar repeat units lie at residues 2–75 (NTFF…MKVK), 92–178 (IDTT…LKKT), and 192–271 (KGAI…VHSL). 6 helical membrane-spanning segments follow: residues 5 to 25 (FLSL…FFPI), 50 to 70 (GLGS…ISYD), 98 to 118 (MLSS…AEVV), 153 to 169 (GWST…CIQF), 194 to 214 (AICG…LDFL), and 252 to 272 (MWIS…HSLL).

It belongs to the mitochondrial carrier (TC 2.A.29) family.

It is found in the mitochondrion inner membrane. This chain is Putative mitochondrial carrier protein PET8 (PET8), found in Saccharomyces cerevisiae (strain ATCC 204508 / S288c) (Baker's yeast).